A 91-amino-acid polypeptide reads, in one-letter code: Small ribosomal subunit protein uS19 (91 aa).

This sequence belongs to the universal ribosomal protein uS19 family.

Protein S19 forms a complex with S13 that binds strongly to the 16S ribosomal RNA. This chain is Small ribosomal subunit protein uS19, found in Lactiplantibacillus plantarum (strain ATCC BAA-793 / NCIMB 8826 / WCFS1) (Lactobacillus plantarum).